The sequence spans 303 residues: Ferrochelatase (303 aa).

Fe cation contacts are provided by His-185 and Glu-262.

This sequence belongs to the ferrochelatase family.

The protein localises to the cytoplasm. The enzyme catalyses heme b + 2 H(+) = protoporphyrin IX + Fe(2+). It participates in porphyrin-containing compound metabolism; protoheme biosynthesis; protoheme from protoporphyrin-IX: step 1/1. Catalyzes the ferrous insertion into protoporphyrin IX. This Campylobacter jejuni subsp. doylei (strain ATCC BAA-1458 / RM4099 / 269.97) protein is Ferrochelatase.